A 193-amino-acid chain; its full sequence is Xanthine phosphoribosyltransferase (193 aa).

The xanthine site is built by leucine 20 and asparagine 27. Position 129–133 (129–133) interacts with 5-phospho-alpha-D-ribose 1-diphosphate; the sequence is ANGKA. Lysine 157 contacts xanthine.

This sequence belongs to the purine/pyrimidine phosphoribosyltransferase family. Xpt subfamily. As to quaternary structure, homodimer.

It is found in the cytoplasm. It catalyses the reaction XMP + diphosphate = xanthine + 5-phospho-alpha-D-ribose 1-diphosphate. It functions in the pathway purine metabolism; XMP biosynthesis via salvage pathway; XMP from xanthine: step 1/1. Functionally, converts the preformed base xanthine, a product of nucleic acid breakdown, to xanthosine 5'-monophosphate (XMP), so it can be reused for RNA or DNA synthesis. The chain is Xanthine phosphoribosyltransferase from Bifidobacterium longum (strain NCC 2705).